The primary structure comprises 700 residues: Elongation factor G (700 aa).

In terms of domain architecture, tr-type G spans 10 to 285; sequence DRTRNIGIMA…AVIDYLPSPL (276 aa). Residues 19-26, 83-87, and 137-140 contribute to the GTP site; these read AHIDAGKT, DTPGH, and NKMD.

This sequence belongs to the TRAFAC class translation factor GTPase superfamily. Classic translation factor GTPase family. EF-G/EF-2 subfamily.

The protein localises to the cytoplasm. Functionally, catalyzes the GTP-dependent ribosomal translocation step during translation elongation. During this step, the ribosome changes from the pre-translocational (PRE) to the post-translocational (POST) state as the newly formed A-site-bound peptidyl-tRNA and P-site-bound deacylated tRNA move to the P and E sites, respectively. Catalyzes the coordinated movement of the two tRNA molecules, the mRNA and conformational changes in the ribosome. In Lacticaseibacillus casei (strain BL23) (Lactobacillus casei), this protein is Elongation factor G.